We begin with the raw amino-acid sequence, 652 residues long: Vacuolar fusion protein MON1 homolog A (652 aa).

Residues 102 to 141 (MQRKRSSECLDGTLTPSDGQSMERAESPTPGMAQGMEPGA) are disordered. Serine 128 and serine 153 each carry phosphoserine. Threonine 158 is modified (phosphothreonine). The disordered stretch occupies residues 158 to 185 (TESEDGAASGDSHKEGTRGPPPLPTDMR). The residue at position 188 (serine 188) is a Phosphoserine. A disordered region spans residues 211–245 (PGSSEDWLEPPGAVGRPATEPPREGTTEGDEEDAT).

Belongs to the MON1/SAND family. In terms of assembly, interacts with CCZ1. Found in a complex with RMC1, CCZ1, MON1A and MON1B. The MON1A-CCZ1B complex interacts with RIMOC1. The MON1A-CCZ1B complex interacts with RAB7A and this interaction is enhanced in the presence of RIMOC1.

In terms of biological role, plays an important role in membrane trafficking through the secretory apparatus. Not involved in endocytic trafficking to lysosomes. Acts in concert with CCZ1, as a guanine exchange factor (GEF) for RAB7, promotes the exchange of GDP to GTP, converting it from an inactive GDP-bound form into an active GTP-bound form. The protein is Vacuolar fusion protein MON1 homolog A (MON1A) of Homo sapiens (Human).